A 377-amino-acid chain; its full sequence is MAPVALEQENHLRDAEFNRAMHGKSAQFRGGFAALRGKDSAAQKAAVDEYFKHWDNKPAEDETEETRAARRAEYATLTRHYYNLATDLYEYGWGTSFHFCRFAQGEPFYQAIARHEHYLAHQMGIKEGMKVLDVGCGVGGPAREIVKFTDANVVGLNNNDYQIERATRYAEREGLSHKLSFVKGDFMQMKFPDNSFDAVYAIEATVHAPDLEGVYKEIFRVLKPGGVFGVYEWLMTDAYDNDNPEHRRIRLGIELGDGISNMVKVSEGLTAFKNAGFELLHNEDLADRPDAIPWYYPLAGSFKHMTSPWDFFTIARMTWWGRGIAHRFCGAMETIGLFPKGTQKTADSLAIAGDCLVAGGEKKLFTPMYLMVGRKPE.

It belongs to the class I-like SAM-binding methyltransferase superfamily. Erg6/SMT family.

The protein localises to the microsome. It localises to the mitochondrion. It catalyses the reaction lanosterol + S-adenosyl-L-methionine = eburicol + S-adenosyl-L-homocysteine + H(+). It functions in the pathway steroid metabolism; ergosterol biosynthesis. Its activity is regulated as follows. Specific and total activity is decreased in presence of alpha-bisabolol. Its function is as follows. Sterol 24-C-methyltransferase; part of the third module of ergosterol biosynthesis pathway that includes the late steps of the pathway. Methylates lanosterol at C-24 to produce eburicol. The third module or late pathway involves the ergosterol synthesis itself through consecutive reactions that mainly occur in the endoplasmic reticulum (ER) membrane. Firstly, the squalene synthase erg9 catalyzes the condensation of 2 farnesyl pyrophosphate moieties to form squalene, which is the precursor of all steroids. Squalene synthase is crucial for balancing the incorporation of farnesyl diphosphate (FPP) into sterol and nonsterol isoprene synthesis. Secondly, squalene is converted into lanosterol by the consecutive action of the squalene epoxidase erg1 and the lanosterol synthase erg7. Then, the delta(24)-sterol C-methyltransferase erg6 methylates lanosterol at C-24 to produce eburicol. Eburicol is the substrate of the sterol 14-alpha demethylase encoded by cyp51A and cyp51B, to yield 4,4,24-trimethyl ergosta-8,14,24(28)-trienol. The C-14 reductase erg24 then reduces the C14=C15 double bond which leads to 4,4-dimethylfecosterol. A sequence of further demethylations at C-4, involving the C-4 demethylation complex containing the C-4 methylsterol oxidases erg25A or erg25B, the sterol-4-alpha-carboxylate 3-dehydrogenase erg26 and the 3-keto-steroid reductase erg27, leads to the production of fecosterol via 4-methylfecosterol. The C-8 sterol isomerase erg2 then catalyzes the reaction which results in unsaturation at C-7 in the B ring of sterols and thus converts fecosterol to episterol. The sterol-C5-desaturase erg3B then catalyzes the introduction of a C-5 double bond in the B ring to produce 5-dehydroepisterol. The 2 other sterol-C5-desaturases, erg3A and erg3C, seem to be less important in ergosterol biosynthesis. The C-22 sterol desaturase erg5 further converts 5-dehydroepisterol into ergosta-5,7,22,24(28)-tetraen-3beta-ol by forming the C-22(23) double bond in the sterol side chain. Finally, ergosta-5,7,22,24(28)-tetraen-3beta-ol is substrate of the C-24(28) sterol reductases erg4A and erg4B to produce ergosterol. Possible alternative sterol biosynthetic pathways might exist from fecosterol to ergosterol, depending on the activities of the erg3 isoforms. This is Sterol 24-C-methyltransferase erg6 from Aspergillus fumigatus (strain ATCC MYA-4609 / CBS 101355 / FGSC A1100 / Af293) (Neosartorya fumigata).